A 216-amino-acid chain; its full sequence is Ethylene-responsive transcription factor ERF016 (216 aa).

Positions lysine 6 to proline 63 form a DNA-binding region, AP2/ERF. The segment at glutamate 121–asparagine 145 is disordered. The segment covering glycine 135–asparagine 145 has biased composition (low complexity).

It belongs to the AP2/ERF transcription factor family. ERF subfamily.

The protein localises to the nucleus. Functionally, probably acts as a transcriptional activator. Binds to the GCC-box pathogenesis-related promoter element. May be involved in the regulation of gene expression by stress factors and by components of stress signal transduction pathways. The polypeptide is Ethylene-responsive transcription factor ERF016 (ERF016) (Arabidopsis thaliana (Mouse-ear cress)).